The primary structure comprises 705 residues: MENKSLQPPLPRSERRIRVLHNDVTIDSYGWLRDREDPDVLAYLEAENHYADEVTSYVAELKADLIAEIEKRDSCDGAPPPFQVGFFFYFQKSQSGLLHSAWWRRPVTGGPEELVFDPNTLPGAEVFYSLGALEPSDDGRYIAFSFDLIGNERYELRVRDMTNGREIWRDPSRAGRLVWAADNRTLFFTRERADRRQHDRVVRLDVETGRSEVVFEEVNERLALVVRRSGSGAYLFIDVIITSDMSSRIQRAAAEVWCLPAERPTDMWRRILARELGHEIYAEHWGNEFLFRVNDTGPNLRLVRTAIDDTSPSRWQEVVPHRAGITLEEIHVLEEHVIVLEREGIQPRLVAHHRNGRVGPSIVPVEHSCTVTVGLSAGGSYSCARHPYRVSALTYKICSFVTPDIFIQHDLLTDKSKVLYRTLVSGFEPELYEARVVMAKAEDGVEVPISIVARRDRGEDGPVLLNVYGCYGAQSLPAFFGWPSSMTARLSLLDRGVAFGIVHVRGGGELGRAWHEAATRDQKRLTHTDLIAAAECLVEHRFASRDGIVIEGRSAGGGTVLAAAVLRPDLFRAVLAEVPLADIIDTELDFTLPYALRETAEYGDPHLANDYQYLRSYDPYYNLTPDRRYPPTYIDAALHDSQVLYYQPARYVAQRRSKAVDRDPDLIFRTRMIGGHMGVSHGPGVAEEAAFRMAWILHRLGQSGR.

Catalysis depends on charge relay system residues Ser554 and His676.

It belongs to the peptidase S9A family.

This is an uncharacterized protein from Sinorhizobium fredii (strain NBRC 101917 / NGR234).